Consider the following 119-residue polypeptide: Large ribosomal subunit protein uL18 (119 aa).

Belongs to the universal ribosomal protein uL18 family. In terms of assembly, part of the 50S ribosomal subunit; part of the 5S rRNA/L5/L18/L25 subcomplex. Contacts the 5S and 23S rRNAs.

This is one of the proteins that bind and probably mediate the attachment of the 5S RNA into the large ribosomal subunit, where it forms part of the central protuberance. The chain is Large ribosomal subunit protein uL18 from Xanthomonas oryzae pv. oryzae (strain PXO99A).